The following is a 29-amino-acid chain: Galanin (29 aa).

At A29 the chain carries Alanine amide.

Belongs to the galanin family.

Its subcellular location is the secreted. In terms of biological role, contracts smooth muscle of the gastrointestinal and genitourinary tract, regulates growth hormone release, modulates insulin release, and may be involved in the control of adrenal secretion. In Alligator mississippiensis (American alligator), this protein is Galanin (GAL).